Here is a 43-residue protein sequence, read N- to C-terminus: Protein PsbN (43 aa).

Residues 5–27 traverse the membrane as a helical segment; sequence TLIAISISGLIVSFTGYALYTAF.

It belongs to the PsbN family.

It localises to the plastid. The protein localises to the chloroplast thylakoid membrane. Functionally, may play a role in photosystem I and II biogenesis. In Cicer arietinum (Chickpea), this protein is Protein PsbN.